The primary structure comprises 403 residues: Phosphoglycerate kinase (403 aa).

Substrate is bound by residues 21–23 (DFN), Arg-36, 59–62 (HVGR), Arg-119, and Arg-154. ATP contacts are provided by residues Lys-207, Gly-299, Glu-330, and 357–360 (GGDA).

This sequence belongs to the phosphoglycerate kinase family. In terms of assembly, monomer.

The protein localises to the cytoplasm. It catalyses the reaction (2R)-3-phosphoglycerate + ATP = (2R)-3-phospho-glyceroyl phosphate + ADP. It functions in the pathway carbohydrate degradation; glycolysis; pyruvate from D-glyceraldehyde 3-phosphate: step 2/5. This chain is Phosphoglycerate kinase (pgk), found in Chlamydia trachomatis serovar D (strain ATCC VR-885 / DSM 19411 / UW-3/Cx).